The chain runs to 266 residues: Energy-coupling factor transporter ATP-binding protein EcfA2 (266 aa).

The ABC transporter domain maps to Ile-3–Met-238. ATP is bound at residue Gly-43–Thr-48. The active-site Proton acceptor is Glu-164. Positions Gly-220–Ser-266 are required for heterodimer formation.

This sequence belongs to the ABC transporter superfamily. Energy-coupling factor EcfA family. As to quaternary structure, forms a heterodimer with EcfA1. Forms a stable energy-coupling factor (ECF) transporter complex composed of 2 membrane-embedded substrate-binding proteins (S component, RibU, BioY), 2 ATP-binding proteins (A component) and 2 transmembrane proteins (T component) upon coexpression in E.coli. Stable subcomplexes with both A plus T components can also be isolated. This complex interacts with at least 2 substrate-specific components, BioY and RibU.

It is found in the cell inner membrane. Its function is as follows. ATP-binding (A) component of a common energy-coupling factor (ECF) ABC-transporter complex. Unlike classic ABC transporters this ECF transporter provides the energy necessary to transport a number of different substrates. Expression of the complex plus RibU in E.coli allows riboflavin uptake; uptake does not occur in the absence of RibU or the EcfA1A2T complex. This Thermotoga maritima (strain ATCC 43589 / DSM 3109 / JCM 10099 / NBRC 100826 / MSB8) protein is Energy-coupling factor transporter ATP-binding protein EcfA2 (ecfA2).